The sequence spans 263 residues: UPF0739 protein C1orf74 homolog (263 aa).

It belongs to the UPF0739 family.

The chain is UPF0739 protein C1orf74 homolog from Bos taurus (Bovine).